The primary structure comprises 117 residues: Large ribosomal subunit protein uL18 (117 aa).

It belongs to the universal ribosomal protein uL18 family. Part of the 50S ribosomal subunit; part of the 5S rRNA/L5/L18/L25 subcomplex. Contacts the 5S and 23S rRNAs.

This is one of the proteins that bind and probably mediate the attachment of the 5S RNA into the large ribosomal subunit, where it forms part of the central protuberance. In Thioalkalivibrio sulfidiphilus (strain HL-EbGR7), this protein is Large ribosomal subunit protein uL18.